Consider the following 248-residue polypeptide: 14-3-3 protein gamma-2 (248 aa).

This sequence belongs to the 14-3-3 family. Homodimer, and heterodimer with other family members. As to expression, expressed in brain, gill, heart, intestine, kidney, liver, ovary, skeletal muscle, spleen and testis.

It is found in the cytoplasm. In terms of biological role, adapter protein implicated in the regulation of a large spectrum of both general and specialized signaling pathways. Binds to a large number of partners, usually by recognition of a phosphoserine or phosphothreonine motif. Binding generally results in the modulation of the activity of the binding partner. The protein is 14-3-3 protein gamma-2 of Oncorhynchus mykiss (Rainbow trout).